Here is a 134-residue protein sequence, read N- to C-terminus: Probable glycine cleavage system H protein (134 aa).

One can recognise a Lipoyl-binding domain in the interval 29–110 (TVLVGITDYA…PYEAWIAKIK (82 aa)). Residue Lys-70 is modified to N6-lipoyllysine.

It belongs to the GcvH family. As to quaternary structure, the glycine cleavage system is composed of four proteins: P, T, L and H. Requires (R)-lipoate as cofactor.

The glycine cleavage system catalyzes the degradation of glycine. The H protein shuttles the methylamine group of glycine from the P protein to the T protein. The protein is Probable glycine cleavage system H protein of Pyrococcus furiosus (strain ATCC 43587 / DSM 3638 / JCM 8422 / Vc1).